The following is a 107-amino-acid chain: Nucleoid-associated protein CE0210 (107 aa).

This sequence belongs to the YbaB/EbfC family. As to quaternary structure, homodimer.

The protein resides in the cytoplasm. Its subcellular location is the nucleoid. Functionally, binds to DNA and alters its conformation. May be involved in regulation of gene expression, nucleoid organization and DNA protection. In Corynebacterium efficiens (strain DSM 44549 / YS-314 / AJ 12310 / JCM 11189 / NBRC 100395), this protein is Nucleoid-associated protein CE0210.